The primary structure comprises 345 residues: MMVTVSYDYDYNSTFLPDGFVDNYVERLSFGDLVAVVIMVVVFLVGVPGNALVVWVTACEARRHINAIWFLNLAAADLLSCLALPILLVSTVHLNHWYFGDTACKVLPSLILLNMYTSILLLATISADRLLLVLSPIWCQRFRGGCLAWTACGLAWVLALLLSSPSFLYRRTHNEHFSFKVYCVTDYGRDISKERAVALVRLLVGFIVPLITLTACYTFLLLRTWSRKATRSAKTVKVVVAVVSSFFVFWLPYQVTGILLAWHSPNSATYRNTKALDAVCVAFAYINCCINPIIYVVAGHGFQGRLLKSLPSVLRNVLTEESLDKRHQSFARSTVDTMPQKSESV.

Over 1–32 the chain is Extracellular; it reads MMVTVSYDYDYNSTFLPDGFVDNYVERLSFGD. 2 positions are modified to sulfotyrosine: Tyr9 and Tyr11. Asn12 is a glycosylation site (N-linked (GlcNAc...) asparagine). The helical transmembrane segment at 33–59 threads the bilayer; that stretch reads LVAVVIMVVVFLVGVPGNALVVWVTAC. The Cytoplasmic segment spans residues 60–64; that stretch reads EARRH. Residues 65–88 traverse the membrane as a helical segment; sequence INAIWFLNLAAADLLSCLALPILL. Residues 89 to 105 lie on the Extracellular side of the membrane; sequence VSTVHLNHWYFGDTACK. An intrachain disulfide couples Cys104 to Cys183. Residues 106 to 127 form a helical membrane-spanning segment; that stretch reads VLPSLILLNMYTSILLLATISA. Over 128-148 the chain is Cytoplasmic; it reads DRLLLVLSPIWCQRFRGGCLA. The chain crosses the membrane as a helical span at residues 149 to 169; the sequence is WTACGLAWVLALLLSSPSFLY. The Extracellular portion of the chain corresponds to 170 to 195; that stretch reads RRTHNEHFSFKVYCVTDYGRDISKER. A helical transmembrane segment spans residues 196 to 221; that stretch reads AVALVRLLVGFIVPLITLTACYTFLL. Residues 222 to 237 are Cytoplasmic-facing; the sequence is LRTWSRKATRSAKTVK. The helical transmembrane segment at 238–260 threads the bilayer; the sequence is VVVAVVSSFFVFWLPYQVTGILL. Topologically, residues 261-277 are extracellular; sequence AWHSPNSATYRNTKALD. Residues 278–298 traverse the membrane as a helical segment; that stretch reads AVCVAFAYINCCINPIIYVVA. Residues 299–345 lie on the Cytoplasmic side of the membrane; sequence GHGFQGRLLKSLPSVLRNVLTEESLDKRHQSFARSTVDTMPQKSESV. Phosphoserine is present on residues Ser309, Ser312, Ser322, Ser329, and Ser333.

This sequence belongs to the G-protein coupled receptor 1 family. Homodimer. May also form higher-order oligomers. Interacts (when phosphorylated) with ARRB1 and ARRB2; the interaction is associated with internalization of C5aR. In terms of processing, sulfation plays a critical role in the association of C5aR with C5a, but no significant role in the ability of the receptor to transduce a signal and mobilize calcium in response to a small peptide agonist. Phosphorylated on serine residues in response to C5a binding, resulting in internalization of the receptor and short-term desensitization to C5a. In terms of tissue distribution, expressed strongly in macrophages and spleen. Weak expression detected in lung, liver, brain, heart and kidney.

Its subcellular location is the cell membrane. It localises to the cytoplasmic vesicle. Functionally, receptor for the chemotactic and inflammatory peptide anaphylatoxin C5a. The ligand interacts with at least two sites on the receptor: a high-affinity site on the extracellular N-terminus, and a second site in the transmembrane region which activates downstream signaling events. Receptor activation stimulates chemotaxis, granule enzyme release, intracellular calcium release and superoxide anion production. The sequence is that of C5a anaphylatoxin chemotactic receptor 1 (C5AR1) from Cavia porcellus (Guinea pig).